A 359-amino-acid chain; its full sequence is uncharacterized protein (359 aa).

The 113-residue stretch at Val163–Gln275 folds into the PINc domain. The Mg(2+) site is built by Asp165 and Asp244. Residues Ile289 to Phe350 form the TRAM domain.

Belongs to the ycf81 family. This sequence in the central section; belongs to the PINc/VapC protein family. Requires Mg(2+) as cofactor.

An RNase. This is an uncharacterized protein from Synechocystis sp. (strain ATCC 27184 / PCC 6803 / Kazusa).